Consider the following 424-residue polypeptide: Tyrosine--tRNA ligase (424 aa).

An L-tyrosine-binding site is contributed by tyrosine 37. Residues 42–51 (PTADSLHLGH) carry the 'HIGH' region motif. The L-tyrosine site is built by tyrosine 175 and glutamine 179. Residues 235–239 (KFGKT) carry the 'KMSKS' region motif. Residue lysine 238 coordinates ATP. Residues 357 to 414 (ADLQQALVNAELVPSRGQARTMIGSNAVAINGEKQADPEYVFTDADRLFGRYTLLRRG) form the S4 RNA-binding domain.

The protein belongs to the class-I aminoacyl-tRNA synthetase family. TyrS type 1 subfamily. As to quaternary structure, homodimer.

It localises to the cytoplasm. The enzyme catalyses tRNA(Tyr) + L-tyrosine + ATP = L-tyrosyl-tRNA(Tyr) + AMP + diphosphate + H(+). In terms of biological role, catalyzes the attachment of tyrosine to tRNA(Tyr) in a two-step reaction: tyrosine is first activated by ATP to form Tyr-AMP and then transferred to the acceptor end of tRNA(Tyr). The chain is Tyrosine--tRNA ligase from Yersinia pestis bv. Antiqua (strain Antiqua).